The primary structure comprises 195 residues: Interferon omega-1 (195 aa).

A signal peptide spans 1 to 23 (MAFSVSSLMALVVISSSPVSSMS). Cystine bridges form between Cys-24–Cys-122 and Cys-52–Cys-162. A glycan (N-linked (GlcNAc...) asparagine) is linked at Asn-101.

Belongs to the alpha/beta interferon family.

The protein localises to the secreted. The polypeptide is Interferon omega-1 (Equus caballus (Horse)).